The following is a 351-amino-acid chain: dTDP-glucose 4,6-dehydratase (351 aa).

NAD(+) is bound by residues 12 to 13 (FI), 32 to 35 (DALT), 58 to 59 (DI), 80 to 84 (FAAES), and Thr-99. Ser-84 is a binding site for substrate. Position 133 (Thr-133) interacts with substrate. Residue Asp-134 is the Proton donor of the active site. Residues Glu-135 and Tyr-158 each act as proton acceptor in the active site. 158 to 162 (YSASK) serves as a coordination point for NAD(+). Asn-187 provides a ligand contact to substrate. Residue Asn-188 participates in NAD(+) binding. Residues 197 to 198 (KL), 213 to 215 (PVY), Arg-222, Asn-257, and 289 to 293 (DRPGH) contribute to the substrate site.

It belongs to the NAD(P)-dependent epimerase/dehydratase family. dTDP-glucose dehydratase subfamily. As to quaternary structure, homodimer. NAD(+) serves as cofactor.

The enzyme catalyses dTDP-alpha-D-glucose = dTDP-4-dehydro-6-deoxy-alpha-D-glucose + H2O. It functions in the pathway carbohydrate biosynthesis; dTDP-L-rhamnose biosynthesis. The protein operates within bacterial outer membrane biogenesis; LPS O-antigen biosynthesis. In terms of biological role, catalyzes the dehydration of dTDP-D-glucose to form dTDP-6-deoxy-D-xylo-4-hexulose via a three-step process involving oxidation, dehydration and reduction. In Xanthomonas campestris pv. campestris (strain B100), this protein is dTDP-glucose 4,6-dehydratase (rfbB).